A 172-amino-acid chain; its full sequence is Large ribosomal subunit protein uL5 (172 aa).

It belongs to the universal ribosomal protein uL5 family. In terms of assembly, component of the large ribosomal subunit.

It is found in the nucleus. The protein resides in the cytoplasm. Its function is as follows. Component of the ribosome, a large ribonucleoprotein complex responsible for the synthesis of proteins in the cell. The small ribosomal subunit (SSU) binds messenger RNAs (mRNAs) and translates the encoded message by selecting cognate aminoacyl-transfer RNA (tRNA) molecules. The large subunit (LSU) contains the ribosomal catalytic site termed the peptidyl transferase center (PTC), which catalyzes the formation of peptide bonds, thereby polymerizing the amino acids delivered by tRNAs into a polypeptide chain. The nascent polypeptides leave the ribosome through a tunnel in the LSU and interact with protein factors that function in enzymatic processing, targeting, and the membrane insertion of nascent chains at the exit of the ribosomal tunnel. The chain is Large ribosomal subunit protein uL5 (RPL11) from Tetrahymena thermophila.